The sequence spans 346 residues: Dimethyladenosine transferase 1, mitochondrial (346 aa).

The N-terminal 27 residues, 1-27, are a transit peptide targeting the mitochondrion; it reads MAASGKLSTCRLPPLPTIREIIKLLRL. Leu38, Gly63, Glu85, Lys86, Asp111, Val112, and Asn141 together coordinate S-adenosyl-L-methionine.

It belongs to the class I-like SAM-binding methyltransferase superfamily. rRNA adenine N(6)-methyltransferase family. KsgA subfamily. Interacts with mitochondrial RNA polymerase POLRMT. Interacts with TFAM. Bound to the maturing mtSSU until the late stages of assembly. In terms of tissue distribution, ubiquitously expressed.

The protein resides in the mitochondrion. The catalysed reaction is adenosine(N)/adenosine(N+1) in rRNA + 4 S-adenosyl-L-methionine = N(6)-dimethyladenosine(N)/N(6)-dimethyladenosine(N+1) in rRNA + 4 S-adenosyl-L-homocysteine + 4 H(+). Its function is as follows. Mitochondrial methyltransferase which uses S-adenosyl methionine to dimethylate two highly conserved adjacent adenosine residues (A1583 and A1584) within the loop of helix 45 at the 3-prime end of 12S rRNA, thereby regulating the assembly or stability of the small subunit of the mitochondrial ribosome. Also required for basal transcription of mitochondrial DNA, probably via its interaction with POLRMT and TFAM. Stimulates transcription independently of the methyltransferase activity. This is Dimethyladenosine transferase 1, mitochondrial from Homo sapiens (Human).